We begin with the raw amino-acid sequence, 124 residues long: Phosphoribosyl-ATP pyrophosphatase (124 aa).

Belongs to the PRA-PH family.

It localises to the cytoplasm. The catalysed reaction is 1-(5-phospho-beta-D-ribosyl)-ATP + H2O = 1-(5-phospho-beta-D-ribosyl)-5'-AMP + diphosphate + H(+). Its pathway is amino-acid biosynthesis; L-histidine biosynthesis; L-histidine from 5-phospho-alpha-D-ribose 1-diphosphate: step 2/9. The protein is Phosphoribosyl-ATP pyrophosphatase (hisE) of Ralstonia nicotianae (strain ATCC BAA-1114 / GMI1000) (Ralstonia solanacearum).